Here is a 258-residue protein sequence, read N- to C-terminus: Indole-3-glycerol phosphate synthase (258 aa).

The protein belongs to the TrpC family.

It catalyses the reaction 1-(2-carboxyphenylamino)-1-deoxy-D-ribulose 5-phosphate + H(+) = (1S,2R)-1-C-(indol-3-yl)glycerol 3-phosphate + CO2 + H2O. It participates in amino-acid biosynthesis; L-tryptophan biosynthesis; L-tryptophan from chorismate: step 4/5. The polypeptide is Indole-3-glycerol phosphate synthase (Chlorobium phaeovibrioides (strain DSM 265 / 1930) (Prosthecochloris vibrioformis (strain DSM 265))).